We begin with the raw amino-acid sequence, 214 residues long: Orotidine 5'-phosphate decarboxylase (214 aa).

Substrate contacts are provided by residues aspartate 11, lysine 33, 59 to 68 (DFKIADIPNT), serine 114, 164 to 174 (PGIGSQGGRAS), glycine 187, and arginine 188. Lysine 61 acts as the Proton donor in catalysis.

The protein belongs to the OMP decarboxylase family. Type 1 subfamily. As to quaternary structure, homodimer.

It catalyses the reaction orotidine 5'-phosphate + H(+) = UMP + CO2. It functions in the pathway pyrimidine metabolism; UMP biosynthesis via de novo pathway; UMP from orotate: step 2/2. Its function is as follows. Catalyzes the decarboxylation of orotidine 5'-monophosphate (OMP) to uridine 5'-monophosphate (UMP). In Thermoplasma acidophilum (strain ATCC 25905 / DSM 1728 / JCM 9062 / NBRC 15155 / AMRC-C165), this protein is Orotidine 5'-phosphate decarboxylase.